Reading from the N-terminus, the 293-residue chain is GTPase Era (293 aa).

Positions 3–170 (KSGFITIIGR…VELMVKYMPE (168 aa)) constitute an Era-type G domain. The interval 11–18 (GRPNVGKS) is G1. 11 to 18 (GRPNVGKS) lines the GTP pocket. The segment at 37 to 41 (QTTRN) is G2. Positions 58–61 (DTPG) are G3. GTP is bound by residues 58-62 (DTPGI) and 120-123 (NKID). The tract at residues 120 to 123 (NKID) is G4. The G5 stretch occupies residues 149 to 151 (ISA). In terms of domain architecture, KH type-2 spans 201 to 278 (LSKEVPHGIA…YLEVWVKVKK (78 aa)).

Belongs to the TRAFAC class TrmE-Era-EngA-EngB-Septin-like GTPase superfamily. Era GTPase family. In terms of assembly, monomer.

Its subcellular location is the cytoplasm. It localises to the cell membrane. In terms of biological role, an essential GTPase that binds both GDP and GTP, with rapid nucleotide exchange. Plays a role in 16S rRNA processing and 30S ribosomal subunit biogenesis and possibly also in cell cycle regulation and energy metabolism. This is GTPase Era from Clostridium kluyveri (strain NBRC 12016).